The sequence spans 511 residues: MSLTDKELFELNKKAVTEGFKIKPRINYTPVGGVNGPLVILDNVKFPRYNEIVNLTLPDGTVRQGQVLEVRGTKAIVQVFEGTSGIDVKKTRVEFTGENLKIPVSEDMLGRIFDGSGRPIDKGPKIFAEDYLDINGSPINPYARIYPEEMISTGVSAIDTMNSIARGQKIPIFSASGLPHNEIAAQICRQAGLVRPTKDVHDGHEENFSIVFAAMGVNLETSRFFKQDFEENGSLERTTLFLNLANDPTIERIITPRLALTTAEFLAYQTERHVLTILTDMSSYADALREVSAAREEVPGRRGYPGYMYTDLSTIYERAGRVEGRNGSITQVPILTMPNDDITHPIPDLTGYITEGQIFIDRQLHNRGIYPPINVLPSLSRLMKSAIGEGMTRKDHGDVSNQLYAKYAIGKDAAAMKAVVGEEALSTEDKLSLEFLEKFEKNFISQGAYENRTIFESLDLAWSLLRIYPKEMLNRISPKILEEFYGRDREQDDDEEEEEDPDKSGDKLIDA.

Arg381 contacts ATP. Residues 484–511 (FYGRDREQDDDEEEEEDPDKSGDKLIDA) are disordered. Positions 491–501 (QDDDEEEEEDP) are enriched in acidic residues. Positions 502 to 511 (DKSGDKLIDA) are enriched in basic and acidic residues.

It belongs to the ATPase alpha/beta chains family. V-ATPase is a heteromultimeric enzyme composed of a peripheral catalytic V1 complex (components A to H) attached to an integral membrane V0 proton pore complex (components: a, c, c', c'', d, e, f and VOA1).

It localises to the vacuole membrane. Non-catalytic subunit of the V1 complex of vacuolar(H+)-ATPase (V-ATPase), a multisubunit enzyme composed of a peripheral complex (V1) that hydrolyzes ATP and a membrane integral complex (V0) that translocates protons. V-ATPase is responsible for acidifying and maintaining the pH of intracellular compartments. The polypeptide is V-type proton ATPase subunit B (VMA2) (Candida tropicalis (Yeast)).